Consider the following 381-residue polypeptide: Chaperone protein DnaJ (381 aa).

Residues 5-70 enclose the J domain; it reads DFYEVLGVGR…QKKAAYDQYG (66 aa). The CR-type zinc finger occupies 136–214; that stretch reads GCSKEIEVPT…CHGQGRKQKT (79 aa). Residues Cys-149, Cys-152, Cys-166, Cys-169, Cys-188, Cys-191, Cys-202, and Cys-205 each coordinate Zn(2+). 4 CXXCXGXG motif repeats span residues 149–156, 166–173, 188–195, and 202–209; these read CDACDGSG, CGTCHGHG, CPTCHGKG, and CNVCHGQG.

This sequence belongs to the DnaJ family. Homodimer. The cofactor is Zn(2+).

Its subcellular location is the cytoplasm. Functionally, participates actively in the response to hyperosmotic and heat shock by preventing the aggregation of stress-denatured proteins and by disaggregating proteins, also in an autonomous, DnaK-independent fashion. Unfolded proteins bind initially to DnaJ; upon interaction with the DnaJ-bound protein, DnaK hydrolyzes its bound ATP, resulting in the formation of a stable complex. GrpE releases ADP from DnaK; ATP binding to DnaK triggers the release of the substrate protein, thus completing the reaction cycle. Several rounds of ATP-dependent interactions between DnaJ, DnaK and GrpE are required for fully efficient folding. Also involved, together with DnaK and GrpE, in the DNA replication of plasmids through activation of initiation proteins. The chain is Chaperone protein DnaJ from Vibrio cholerae serotype O1 (strain ATCC 39541 / Classical Ogawa 395 / O395).